The primary structure comprises 380 residues: MAKRDYYEILGVSKNATKEEIKKAYRKLSKKYHPDINKEPDAAEKFKEIKEAYEVLSDDQKRAHYDQFGHADPNQGFGGFRSDDFDFGGFSGFGGFEDIFSTFFGGGRRRDPNAPRAGADLQYTMTLTFEEAAFGKETDIEIPREETCDTCHGTGAKPGTKKETCSYCHGTGQISTEQSTPFGRIVNRRTCPYCGGTGQYIKEKCTTCGGTGRVKKRKKIHVKIPAGIDDGQQLRVAGQGEPGINGGPPGDLYIVFHVEPHEFFERDGDDIYCEIPLTFAQAALGDEIEVPTLHGKVKLKIPAGTQTGTKFRLKGKGVPNVRGYGYGDQHVIVRVVTPTKLTEKQKQLLREFDQLGGSSMHQGPYGRFFDKVKKAFKGES.

Positions 5 to 69 (DYYEILGVSK…QKRAHYDQFG (65 aa)) constitute a J domain. The CR-type zinc-finger motif lies at 135–217 (GKETDIEIPR…CGGTGRVKKR (83 aa)). Positions 148, 151, 165, 168, 191, 194, 205, and 208 each coordinate Zn(2+). 4 CXXCXGXG motif repeats span residues 148-155 (CDTCHGTG), 165-172 (CSYCHGTG), 191-198 (CPYCGGTG), and 205-212 (CTTCGGTG).

Belongs to the DnaJ family. As to quaternary structure, homodimer. Zn(2+) is required as a cofactor.

It localises to the cytoplasm. In terms of biological role, participates actively in the response to hyperosmotic and heat shock by preventing the aggregation of stress-denatured proteins and by disaggregating proteins, also in an autonomous, DnaK-independent fashion. Unfolded proteins bind initially to DnaJ; upon interaction with the DnaJ-bound protein, DnaK hydrolyzes its bound ATP, resulting in the formation of a stable complex. GrpE releases ADP from DnaK; ATP binding to DnaK triggers the release of the substrate protein, thus completing the reaction cycle. Several rounds of ATP-dependent interactions between DnaJ, DnaK and GrpE are required for fully efficient folding. Also involved, together with DnaK and GrpE, in the DNA replication of plasmids through activation of initiation proteins. The sequence is that of Chaperone protein DnaJ from Geobacillus sp. (strain WCH70).